A 174-amino-acid polypeptide reads, in one-letter code: Amino-acid acetyltransferase (174 aa).

Positions 10-148 constitute an N-acetyltransferase domain; that stretch reads PVVRRARTSD…VFDEMCRSYD (139 aa).

It belongs to the acetyltransferase family. Homodimer and homotetramer.

It catalyses the reaction L-glutamate + acetyl-CoA = N-acetyl-L-glutamate + CoA + H(+). Its pathway is amino-acid biosynthesis; L-arginine biosynthesis; N(2)-acetyl-L-ornithine from L-glutamate: step 1/4. With respect to regulation, inhibited by L-arginine. Functionally, catalyzes the conversion of L-glutamate to alpha-N-acetyl-L-glutamate. L-glutamine is a significantly better substrate compared to L-glutamate. The sequence is that of Amino-acid acetyltransferase (argA) from Mycobacterium tuberculosis (strain ATCC 25618 / H37Rv).